A 444-amino-acid polypeptide reads, in one-letter code: tRNA modification GTPase MnmE (444 aa).

Arginine 22, glutamate 79, and arginine 118 together coordinate (6S)-5-formyl-5,6,7,8-tetrahydrofolate. The 155-residue stretch at 214-368 (GMQVVLAGPP…LRDHLKSVMG (155 aa)) folds into the TrmE-type G domain. Asparagine 224 contacts K(+). Residues 224–229 (NAGKSS), 243–249 (TEVPGTT), and 268–271 (DTAG) contribute to the GTP site. A Mg(2+)-binding site is contributed by serine 228. The K(+) site is built by threonine 243, valine 245, and threonine 248. Mg(2+) is bound at residue threonine 249. (6S)-5-formyl-5,6,7,8-tetrahydrofolate is bound at residue lysine 444.

This sequence belongs to the TRAFAC class TrmE-Era-EngA-EngB-Septin-like GTPase superfamily. TrmE GTPase family. Homodimer. Heterotetramer of two MnmE and two MnmG subunits. The cofactor is K(+).

The protein resides in the cytoplasm. Functionally, exhibits a very high intrinsic GTPase hydrolysis rate. Involved in the addition of a carboxymethylaminomethyl (cmnm) group at the wobble position (U34) of certain tRNAs, forming tRNA-cmnm(5)s(2)U34. This Alkalilimnicola ehrlichii (strain ATCC BAA-1101 / DSM 17681 / MLHE-1) protein is tRNA modification GTPase MnmE.